The chain runs to 91 residues: Small ribosomal subunit protein uS19 (91 aa).

It belongs to the universal ribosomal protein uS19 family.

Protein S19 forms a complex with S13 that binds strongly to the 16S ribosomal RNA. The sequence is that of Small ribosomal subunit protein uS19 from Bordetella avium (strain 197N).